A 153-amino-acid polypeptide reads, in one-letter code: Peritrophin-1 (153 aa).

An N-terminal signal peptide occupies residues 1 to 17 (MKVSASLVLLLAAAVLA). Chitin-binding type-2 domains lie at 18–79 (DDRC…QCAP) and 92–153 (SPNC…QCEE). Disulfide bonds link Cys-56/Cys-69 and Cys-130/Cys-143. The N-linked (GlcNAc...) asparagine glycan is linked to Asn-63.

Glycosylated. As to expression, adult peritrophic membrane.

Binds chitin but not cellulose. May be involved in the spatial organization of PM. The sequence is that of Peritrophin-1 (Aper1) from Anopheles gambiae (African malaria mosquito).